The chain runs to 226 residues: Cytidylate kinase (226 aa).

Residue 10-18 coordinates ATP; sequence GPASSGKST.

Belongs to the cytidylate kinase family. Type 1 subfamily.

It is found in the cytoplasm. It carries out the reaction CMP + ATP = CDP + ADP. The enzyme catalyses dCMP + ATP = dCDP + ADP. The protein is Cytidylate kinase of Streptococcus pyogenes serotype M4 (strain MGAS10750).